A 437-amino-acid chain; its full sequence is F-box protein At3g62430 (437 aa).

The F-box domain occupies 1–49; it reads MDRISNLPDGVIYRVISLLSTKEATCLKYTSKNWLNLVTIIPIAVFVDS.

The sequence is that of F-box protein At3g62430 from Arabidopsis thaliana (Mouse-ear cress).